The following is a 25-amino-acid chain: Small ribosomal subunit protein eS32 (25 aa).

The tract at residues M1–K25 is disordered.

Belongs to the eukaryotic ribosomal protein eS32 family. Component of the small ribosomal subunit.

The polypeptide is Small ribosomal subunit protein eS32 (RPL41) (Eremothecium gossypii (strain ATCC 10895 / CBS 109.51 / FGSC 9923 / NRRL Y-1056) (Yeast)).